The chain runs to 239 residues: tRNA (guanine-N(1)-)-methyltransferase (239 aa).

Residues Gly110 and 130-135 (IGDYVL) contribute to the S-adenosyl-L-methionine site.

Belongs to the RNA methyltransferase TrmD family. Homodimer.

The protein localises to the cytoplasm. The catalysed reaction is guanosine(37) in tRNA + S-adenosyl-L-methionine = N(1)-methylguanosine(37) in tRNA + S-adenosyl-L-homocysteine + H(+). In terms of biological role, specifically methylates guanosine-37 in various tRNAs. This Borrelia garinii subsp. bavariensis (strain ATCC BAA-2496 / DSM 23469 / PBi) (Borreliella bavariensis) protein is tRNA (guanine-N(1)-)-methyltransferase.